Here is a 663-residue protein sequence, read N- to C-terminus: LMAGHPNYGDILMQSGGAAGTAHLHEYLSPVDVSRFSSPRVTPRLSRKRALSISPLSDASIDLQTMIRTSPNSLVAYINNSRSSSAASGSYGHLSAGTISPAFSFPHPINPVTYQQILTQQRGLSSAFGHTPPLIQPSPTFPPRQHMAVISVNPPPAQISSNSNCISDSSQSKQSSESAVSSTVNPVINKRTKVKTEVEGLPQYPQPRQEHLTDLKEDLDKDECKQEPEVIYETNCHWEGCTKEYDTQEQLVHHINNDHIHGEKKEFVCRWQDCTREQKPFKAQYMLVVHMRRHTGEKPHKCTFEGCSKAYSRLENLKTHLRSHTGEKPYVCEHEGCNKAFSNASDRAKHQNRTHSNEKPYVCKIPGCTKRYTDPSSLRKHVKTVHGPDAHVTKKQRNDVHPRPPPLKENGDNEASAKQSSKVSEESPEANSTTRSMEDCLQVKTIKTENSVMCQSSPGGQSSCSSEPSPLGSTNNNDSGVEMNMHGGGSLGDLTGWMTRLPVVDSTVSSGNLTVSLQLRKHMTTMQRLEQLKKEKLKTVKDSCSWVNPAPQGRNTKLPPISGNGSILENSGGSSRTLPNPRIMELSVNEVTMLNQINERRDSTTSTISSAYTVSRRSSGISPYFSSRRSSEASQLGHRPNNTSSADSYDPISTGGREFDIKL.

The tract at residues 159–186 is disordered; it reads ISSNSNCISDSSQSKQSSESAVSSTVNP. The span at 160–182 shows a compositional bias: low complexity; it reads SSNSNCISDSSQSKQSSESAVSS. 5 consecutive C2H2-type zinc fingers follow at residues 234–259, 267–294, 300–324, 330–355, and 361–386; these read TNCH…NNDH, FVCR…MRRH, HKCT…LRSH, YVCE…NRTH, and YVCK…KTVH. Disordered regions lie at residues 374 to 440, 452 to 481, 544 to 578, and 619 to 663; these read DPSS…MEDC, VMCQ…DSGV, CSWV…SRTL, and SGIS…DIKL. Over residues 386–402 the composition is skewed to basic and acidic residues; the sequence is HGPDAHVTKKQRNDVHP. Over residues 456–473 the composition is skewed to low complexity; it reads SSPGGQSSCSSEPSPLGS. Composition is skewed to polar residues over residues 563-578 and 619-647; these read GNGS…SRTL and SGIS…SSAD.

It belongs to the GLI C2H2-type zinc-finger protein family.

Its subcellular location is the nucleus. It localises to the cytoplasm. The protein resides in the cell projection. The protein localises to the cilium. Its function is as follows. Functions as a transcription regulator in the hedgehog (Hh) pathway. Functions as a transcriptional activator. May also function as transcriptional repressor. Binds to the DNA sequence 5'-GAACCACCCA-3'. Is involved in the smoothened (SHH) signaling pathway. Required for normal skeleton development. In Gallus gallus (Chicken), this protein is Zinc finger protein GLI2.